Here is a 316-residue protein sequence, read N- to C-terminus: Lipoyl synthase (316 aa).

Residues C60, C65, C71, C86, C90, C93, and S297 each coordinate [4Fe-4S] cluster. Residues 72 to 286 (WEDREATFLI…KDEADEVGFT (215 aa)) form the Radical SAM core domain.

Belongs to the radical SAM superfamily. Lipoyl synthase family. It depends on [4Fe-4S] cluster as a cofactor.

The protein resides in the cytoplasm. It catalyses the reaction [[Fe-S] cluster scaffold protein carrying a second [4Fe-4S](2+) cluster] + N(6)-octanoyl-L-lysyl-[protein] + 2 oxidized [2Fe-2S]-[ferredoxin] + 2 S-adenosyl-L-methionine + 4 H(+) = [[Fe-S] cluster scaffold protein] + N(6)-[(R)-dihydrolipoyl]-L-lysyl-[protein] + 4 Fe(3+) + 2 hydrogen sulfide + 2 5'-deoxyadenosine + 2 L-methionine + 2 reduced [2Fe-2S]-[ferredoxin]. The protein operates within protein modification; protein lipoylation via endogenous pathway; protein N(6)-(lipoyl)lysine from octanoyl-[acyl-carrier-protein]: step 2/2. Its function is as follows. Catalyzes the radical-mediated insertion of two sulfur atoms into the C-6 and C-8 positions of the octanoyl moiety bound to the lipoyl domains of lipoate-dependent enzymes, thereby converting the octanoylated domains into lipoylated derivatives. The protein is Lipoyl synthase of Nocardioides sp. (strain ATCC BAA-499 / JS614).